The sequence spans 477 residues: Argininosuccinate lyase (477 aa).

Belongs to the lyase 1 family. Argininosuccinate lyase subfamily.

The protein resides in the cytoplasm. The catalysed reaction is 2-(N(omega)-L-arginino)succinate = fumarate + L-arginine. It participates in amino-acid biosynthesis; L-arginine biosynthesis; L-arginine from L-ornithine and carbamoyl phosphate: step 3/3. In Acinetobacter baumannii (strain AB307-0294), this protein is Argininosuccinate lyase.